We begin with the raw amino-acid sequence, 242 residues long: Zinc finger protein ZOP1 (242 aa).

The Matrin-type zinc-finger motif lies at 11–42; sequence KWCEFCKIWIQNNPTSIRNHDLGKRHRECVDK. Residues 42–71 adopt a coiled-coil conformation; the sequence is KKLTDMRERSAAKDKELKKNEKLLQQIEAK. The tract at residues 154-242 is disordered; that stretch reads VKKPVSSSGA…PLLGLYNRPF (89 aa). Positions 155-172 are enriched in low complexity; the sequence is KKPVSSSGAGPSVGKPPG. A compositionally biased stretch (basic and acidic residues) spans 201-233; the sequence is RQDEKPKKVSAEEKAALKAREAARKRVEDREKP.

In terms of assembly, component of a pre-mRNA splicing complex. Interacts with STA1. Interacts with PRP31.

It localises to the nucleus. The protein localises to the cajal body. Its function is as follows. Nucleic acid-binding protein that promotes Pol IV-dependent small interfering RNA (siRNA) accumulation, DNA methylation and transcriptional silencing. May possess both RNA-directed DNA methylation (RdDM)-dependent and -independent roles in transcriptional silencing. Acts as a pre-mRNA splicing factor that associates with several typical components of the splicing machinery as well as with Pol II. In Arabidopsis thaliana (Mouse-ear cress), this protein is Zinc finger protein ZOP1.